Reading from the N-terminus, the 90-residue chain is NELL2-interacting cell ontogeny regulator 1 (90 aa).

Positions 1–28 (MAPALRSLLSPRTLLLLLLSLALLGARA) are cleaved as a signal peptide.

The protein belongs to the NICOL family. As to quaternary structure, interacts with NELL2; triggers epididymal differentiation. Interacts with cell surface receptor TFRC; the interaction mediates uptake of NICOL1 into fibroblasts. In terms of tissue distribution, expression is enriched in both male and female reproductive organs, including the testis, epididymis, seminal vesicles, coagulating glands, ovary and uterus, and in various non-reproductive organs such as brain, thymus and liver. In testis, expressed in both germ cells and Sertoli cells. Also expressed at low levels in the kidney. Expressed during neocortex and cerebellum development.

The protein resides in the secreted. Its subcellular location is the cytoplasm. It is found in the perinuclear region. In terms of biological role, mRNA-binding protein which interacts with a range of target mRNAs including SERPINE1, ACTA2, CCN2 and COL4A1 and may promote extracellular matrix production. Binds to the 3'-UTR of SERPINE1 mRNA and stabilizes the mRNA, possibly by competing for binding with SERBP1 and preventing SERBP1-mediated mRNA degradation. Also binds to the 3'-UTR of ACTA2. Testis-derived lumicrine factor that triggers epididymal differentiation and sperm maturation. This chain is NELL2-interacting cell ontogeny regulator 1, found in Mus musculus (Mouse).